Reading from the N-terminus, the 335-residue chain is Methionine import ATP-binding protein MetN 1 (335 aa).

Residues 2–242 (IEFQQVHKTY…PQHPTTKRFV (241 aa)) form the ABC transporter domain. 38-45 (GHSGAGKS) contacts ATP.

This sequence belongs to the ABC transporter superfamily. Methionine importer (TC 3.A.1.24) family. In terms of assembly, the complex is composed of two ATP-binding proteins (MetN), two transmembrane proteins (MetI) and a solute-binding protein (MetQ).

It is found in the cell inner membrane. The enzyme catalyses L-methionine(out) + ATP + H2O = L-methionine(in) + ADP + phosphate + H(+). It carries out the reaction D-methionine(out) + ATP + H2O = D-methionine(in) + ADP + phosphate + H(+). Part of the ABC transporter complex MetNIQ involved in methionine import. Responsible for energy coupling to the transport system. This is Methionine import ATP-binding protein MetN 1 from Pseudomonas putida (strain ATCC 47054 / DSM 6125 / CFBP 8728 / NCIMB 11950 / KT2440).